The primary structure comprises 176 residues: Flavodoxin (176 aa).

A Flavodoxin-like domain is found at 4 to 165; the sequence is IGIFFGSDTG…RVEKWVKQVA (162 aa).

It belongs to the flavodoxin family. Requires FMN as cofactor.

Its function is as follows. Low-potential electron donor to a number of redox enzymes. The sequence is that of Flavodoxin (fldA) from Klebsiella pneumoniae.